Consider the following 371-residue polypeptide: Vasopressin V2 receptor (371 aa).

The Extracellular portion of the chain corresponds to Met-1 to Arg-38. Asn-22 is a glycosylation site (N-linked (GlcNAc...) asparagine). A helical membrane pass occupies residues Ala-39–Ile-63. Residues Arg-64 to Phe-77 are Cytoplasmic-facing. A helical membrane pass occupies residues Ile-78–Ala-98. At Trp-99–Arg-113 the chain is on the extracellular side. The chain crosses the membrane as a helical span at residues Ala-114–Leu-135. At Asp-136–Pro-159 the chain is on the cytoplasmic side. Residues Val-160–Gln-180 form a helical membrane-spanning segment. Residues Arg-181 to Trp-200 lie on the Extracellular side of the membrane. The N-linked (GlcNAc...) asparagine glycan is linked to Asn-185. Residues Gly-201–Gly-220 traverse the membrane as a helical segment. Over Ile-221–Arg-271 the chain is Cytoplasmic. The interval Pro-240 to Ala-260 is disordered. Residues Met-272–Trp-293 form a helical membrane-spanning segment. Residues Ala-294–Val-308 lie on the Extracellular side of the membrane. The chain crosses the membrane as a helical span at residues Leu-309–Phe-328. Topologically, residues Ser-329 to Ser-371 are cytoplasmic. 2 S-palmitoyl cysteine lipidation sites follow: Cys-341 and Cys-342. Residues His-349–Ser-371 form a disordered region. Polar residues predominate over residues Ser-357–Ser-371.

It belongs to the G-protein coupled receptor 1 family. Vasopressin/oxytocin receptor subfamily. In terms of assembly, interacts with ARRDC4. Identified in a complex containing at least ARRDC4, V2R and HGS. Interacts with TMEM147. As to expression, kidney.

The protein localises to the cell membrane. Receptor for arginine vasopressin. The activity of this receptor is mediated by G proteins which activate adenylate cyclase. Involved in renal water reabsorption. The sequence is that of Vasopressin V2 receptor (Avpr2) from Rattus norvegicus (Rat).